The following is a 245-amino-acid chain: Probable transcriptional regulatory protein Ddes_0536 (245 aa).

Positions 1–21 (MAGHSKWANIQHRKGRQDAKR) are disordered.

Belongs to the TACO1 family.

It localises to the cytoplasm. This chain is Probable transcriptional regulatory protein Ddes_0536, found in Desulfovibrio desulfuricans (strain ATCC 27774 / DSM 6949 / MB).